The sequence spans 157 residues: Transcription elongation factor GreA (157 aa).

A coiled-coil region spans residues 14 to 37 (LREELDRLLKLRPKITEAIAEARE).

Belongs to the GreA/GreB family.

In terms of biological role, necessary for efficient RNA polymerase transcription elongation past template-encoded arresting sites. The arresting sites in DNA have the property of trapping a certain fraction of elongating RNA polymerases that pass through, resulting in locked ternary complexes. Cleavage of the nascent transcript by cleavage factors such as GreA or GreB allows the resumption of elongation from the new 3'terminus. GreA releases sequences of 2 to 3 nucleotides. The polypeptide is Transcription elongation factor GreA (Vibrio cholerae serotype O1 (strain ATCC 39315 / El Tor Inaba N16961)).